The primary structure comprises 512 residues: UDP-N-acetylmuramate--L-alanine ligase (512 aa).

132–138 is a binding site for ATP; that stretch reads GAHGKTT.

It belongs to the MurCDEF family.

The protein resides in the cytoplasm. It catalyses the reaction UDP-N-acetyl-alpha-D-muramate + L-alanine + ATP = UDP-N-acetyl-alpha-D-muramoyl-L-alanine + ADP + phosphate + H(+). Its pathway is cell wall biogenesis; peptidoglycan biosynthesis. Functionally, cell wall formation. The sequence is that of UDP-N-acetylmuramate--L-alanine ligase from Bifidobacterium longum (strain NCC 2705).